A 351-amino-acid polypeptide reads, in one-letter code: Phosphoribosylformylglycinamidine cyclo-ligase (351 aa).

Belongs to the AIR synthase family.

The protein resides in the cytoplasm. The catalysed reaction is 2-formamido-N(1)-(5-O-phospho-beta-D-ribosyl)acetamidine + ATP = 5-amino-1-(5-phospho-beta-D-ribosyl)imidazole + ADP + phosphate + H(+). The protein operates within purine metabolism; IMP biosynthesis via de novo pathway; 5-amino-1-(5-phospho-D-ribosyl)imidazole from N(2)-formyl-N(1)-(5-phospho-D-ribosyl)glycinamide: step 2/2. The chain is Phosphoribosylformylglycinamidine cyclo-ligase from Burkholderia cenocepacia (strain ATCC BAA-245 / DSM 16553 / LMG 16656 / NCTC 13227 / J2315 / CF5610) (Burkholderia cepacia (strain J2315)).